Consider the following 40-residue polypeptide: Photosystem II reaction center protein Psb30 (40 aa).

A helical transmembrane segment spans residues 12 to 32 (VIFQLTSVALIIIAGPAVIFV).

The protein belongs to the Psb30/Ycf12 family. In terms of assembly, PSII is composed of 1 copy each of membrane proteins PsbA, PsbB, PsbC, PsbD, PsbE, PsbF, PsbH, PsbI, PsbJ, PsbK, PsbL, PsbM, PsbT, PsbX, PsbY, PsbZ, Psb30/Ycf12, peripheral proteins PsbO, CyanoQ (PsbQ), PsbU, PsbV and a large number of cofactors. It forms dimeric complexes.

It localises to the cellular thylakoid membrane. A core subunit of photosystem II (PSII), probably helps stabilize the reaction center. The chain is Photosystem II reaction center protein Psb30 from Nostoc sp. (strain PCC 7120 / SAG 25.82 / UTEX 2576).